Here is an 85-residue protein sequence, read N- to C-terminus: Large ribosomal subunit protein bL27 (85 aa).

The tract at residues 1–20 (MAHKKAGGSTRNGRDSESKR) is disordered.

This sequence belongs to the bacterial ribosomal protein bL27 family.

In Yersinia enterocolitica serotype O:8 / biotype 1B (strain NCTC 13174 / 8081), this protein is Large ribosomal subunit protein bL27.